The primary structure comprises 911 residues: Nitrate reductase [NADH], clone PBNBR1405 (911 aa).

The disordered stretch occupies residues 1 to 68 (MATSVDNRHY…RFDSSDDEDE (68 aa)). Positions 49–62 (KSVDKTTKEDRFDS) are enriched in basic and acidic residues. Position 191 (cysteine 191) interacts with Mo-molybdopterin. The region spanning 539–614 (SKMYSMSEVR…LEDYRIGELI (76 aa)) is the Cytochrome b5 heme-binding domain. 2 residues coordinate heme: histidine 574 and histidine 597. In terms of domain architecture, FAD-binding FR-type spans 654–766 (REKVPVKLIE…KGPLGHIEYQ (113 aa)). Residues 706–709 (RAYT), 723–727 (VIKVY), phenylalanine 728, phenylalanine 735, 740–742 (LMS), and threonine 793 contribute to the FAD site.

It belongs to the nitrate reductase family. As to quaternary structure, homodimer. Requires FAD as cofactor. Heme is required as a cofactor. The cofactor is Mo-molybdopterin.

It carries out the reaction nitrite + NAD(+) + H2O = nitrate + NADH + H(+). In terms of biological role, nitrate reductase is a key enzyme involved in the first step of nitrate assimilation in plants, fungi and bacteria. This Brassica napus (Rape) protein is Nitrate reductase [NADH], clone PBNBR1405 (NIA1).